Reading from the N-terminus, the 266-residue chain is 14-3-3 protein homolog (266 aa).

The disordered stretch occupies residues K154–A177. A compositionally biased stretch (polar residues) spans D158–T168.

The protein belongs to the 14-3-3 family.

The polypeptide is 14-3-3 protein homolog (Neospora caninum (Coccidian parasite)).